We begin with the raw amino-acid sequence, 1073 residues long: Carbamoyl phosphate synthase large chain (1073 aa).

Positions 1–399 (MPKREDIKKV…SLLKAFKSLD (399 aa)) are carboxyphosphate synthetic domain. ATP contacts are provided by Arg129, Arg169, Gly175, Gly176, Glu208, Val210, Glu215, Gly241, Val242, His243, Gln284, and Glu296. The ATP-grasp 1 domain maps to 133–325 (KETMLSIGEK…IARVTAKIAI (193 aa)). 3 residues coordinate Mg(2+): Gln284, Glu296, and Asn298. Mn(2+) is bound by residues Gln284, Glu296, and Asn298. The oligomerization domain stretch occupies residues 400–540 (IDNQLGIKRW…YSTYEDTCET (141 aa)). The interval 541-931 (NSTDKKKILI…YKAELAADNL (391 aa)) is carbamoyl phosphate synthetic domain. Positions 672–863 (YLLMQELGIP…LAKIAAKVIA (192 aa)) constitute an ATP-grasp 2 domain. ATP-binding residues include Arg708, Asp747, Leu749, Glu754, Gly779, Val780, His781, Ser782, Gln822, and Glu834. Mg(2+)-binding residues include Gln822, Glu834, and Asn836. 3 residues coordinate Mn(2+): Gln822, Glu834, and Asn836. In terms of domain architecture, MGS-like spans 930–1071 (NLLPLTGKVF…NEYHKEMEQK (142 aa)). Residues 932–1073 (LPLTGKVFLS…YHKEMEQKEE (142 aa)) are allosteric domain.

Belongs to the CarB family. As to quaternary structure, composed of two chains; the small (or glutamine) chain promotes the hydrolysis of glutamine to ammonia, which is used by the large (or ammonia) chain to synthesize carbamoyl phosphate. Tetramer of heterodimers (alpha,beta)4. Requires Mg(2+) as cofactor. The cofactor is Mn(2+).

It catalyses the reaction hydrogencarbonate + L-glutamine + 2 ATP + H2O = carbamoyl phosphate + L-glutamate + 2 ADP + phosphate + 2 H(+). The enzyme catalyses hydrogencarbonate + NH4(+) + 2 ATP = carbamoyl phosphate + 2 ADP + phosphate + 2 H(+). The protein operates within amino-acid biosynthesis; L-arginine biosynthesis; carbamoyl phosphate from bicarbonate: step 1/1. It functions in the pathway pyrimidine metabolism; UMP biosynthesis via de novo pathway; (S)-dihydroorotate from bicarbonate: step 1/3. Functionally, large subunit of the glutamine-dependent carbamoyl phosphate synthetase (CPSase). CPSase catalyzes the formation of carbamoyl phosphate from the ammonia moiety of glutamine, carbonate, and phosphate donated by ATP, constituting the first step of 2 biosynthetic pathways, one leading to arginine and/or urea and the other to pyrimidine nucleotides. The large subunit (synthetase) binds the substrates ammonia (free or transferred from glutamine from the small subunit), hydrogencarbonate and ATP and carries out an ATP-coupled ligase reaction, activating hydrogencarbonate by forming carboxy phosphate which reacts with ammonia to form carbamoyl phosphate. The protein is Carbamoyl phosphate synthase large chain of Methanosarcina mazei (strain ATCC BAA-159 / DSM 3647 / Goe1 / Go1 / JCM 11833 / OCM 88) (Methanosarcina frisia).